Here is a 467-residue protein sequence, read N- to C-terminus: Trigger factor (467 aa).

One can recognise a PPIase FKBP-type domain in the interval 162–243 (GDFVSIDLSA…LNSVKERHLP (82 aa)). The span at 426–435 (EEGNELDLDE) shows a compositional bias: acidic residues. The tract at residues 426–467 (EEGNELDLDELFGTQAGEEQGEQAEGTEATDEQSAKADAKAE) is disordered. Low complexity predominate over residues 436-452 (LFGTQAGEEQGEQAEGT). The span at 458–467 (QSAKADAKAE) shows a compositional bias: basic and acidic residues.

This sequence belongs to the FKBP-type PPIase family. Tig subfamily.

It is found in the cytoplasm. It catalyses the reaction [protein]-peptidylproline (omega=180) = [protein]-peptidylproline (omega=0). In terms of biological role, involved in protein export. Acts as a chaperone by maintaining the newly synthesized protein in an open conformation. Functions as a peptidyl-prolyl cis-trans isomerase. This Saccharopolyspora erythraea (strain ATCC 11635 / DSM 40517 / JCM 4748 / NBRC 13426 / NCIMB 8594 / NRRL 2338) protein is Trigger factor.